Reading from the N-terminus, the 1315-residue chain is Tetratricopeptide repeat protein 21B (1315 aa).

TPR repeat units follow at residues 108-141 (RKALYHAGLFLWHIGRHDKAREYIDRMSKMPHDS), 145-178 (PILKAWLDITRGKEPYAKKALRYFEEGLQDGNDI), 192-225 (QNYSGALETVSQIIVNFPSFLPAFEKKMKLQLAL), 285-323 (AQLFYKITLAFSRTCGRNQLILQKVQSFLEKAFSLTPQQ), 324-357 (AEIATELGYQMILQGKVKEAWKWYRTAMTLNESN), 492-525 (PQAVFLMAKVKYLSGDTEAAYNNLQHCLEHSPSY), 563-596 (PLYHLIKAQSQKKMGEVAEAIKTLHMAMNLPGMR), 616-649 (LSIFLELVEVHRLNGEQHEAAKVLQDAIHEFSGT), 721-754 (PRSFLLLGDAYMNIQEPEEAIVAYEQALNQNPKD), 756-788 (TLARKIGKALVKTHNYSKAITYYEAALKSGQQN), 790-821 (LCYDLAELLLRLKLYEKAEKVLQHSLAHEPVS), 830-863 (GRSQVLLAKVYSKMERPSDAIAALQQARELQARI), 883-916 (AEICAEIAKHSAAQRDYEKAITFYREALVHCETD), 918-950 (KIMLELAQLYLAQEDLDASLRHCALLLQRDQDN), 951-984 (EPATMLMADLMFRKQDYEQAVYHLQQLLDRKPDN), 1022-1055 (PGFQYCKGLHFWYTGEPNDALRHFNKARKDSDWG), 1196-1229 (EKSWLLLADIYIQSAKYDMAEELLKRCLCHNRSC), 1231-1263 (KAYEYMGYIMEKEQAYTDAAFNYEMAWKHSNQT), and 1265-1298 (PAVGYKLAFNYLKAKRYVDAIDVCHQVLEAHPTY).

This sequence belongs to the TTC21 family. In terms of assembly, component of the IFT complex A (IFT-A) complex. IFT-A complex is divided into a core subcomplex composed of IFT122:IFT140:WDR19 which is associated with TULP3 and a peripheral subcomplex composed of IFT43:WDR35:TTC21B. Interacts directy with WDR35 and TTC21B. Interacts with TTC25.

Its subcellular location is the cytoplasm. It is found in the cytoskeleton. The protein localises to the cilium axoneme. Its function is as follows. Component of the IFT complex A (IFT-A), a complex required for retrograde ciliary transport and entry into cilia of G protein-coupled receptors (GPCRs). Essential for retrograde trafficking of IFT-1, IFT-B and GPCRs. Negatively modulates the SHH signal transduction. The sequence is that of Tetratricopeptide repeat protein 21B (Ttc21b) from Mus musculus (Mouse).